Consider the following 335-residue polypeptide: N-lysine methyltransferase KMT5A-A (335 aa).

2 disordered regions span residues 1 to 91 (MGRG…EVEK) and 133 to 183 (LPPE…EIES). Residues 67–91 (SVTHHESKCLGKPSTETRKKAEVEK) are compositionally biased toward basic and acidic residues. The segment covering 145-161 (VKNKPLRKKTQRQKSPN) has biased composition (basic residues). An SET domain is found at 199–320 (EGIKMHMITG…VGEELLYDYG (122 aa)). S-adenosyl-L-methionine contacts are provided by residues 209-211 (KGR), tyrosine 254, and 281-282 (NH).

This sequence belongs to the class V-like SAM-binding methyltransferase superfamily. Histone-lysine methyltransferase family. PR/SET subfamily.

It is found in the nucleus. The protein resides in the chromosome. The enzyme catalyses L-lysyl(20)-[histone H4] + S-adenosyl-L-methionine = N(6)-methyl-L-lysyl(20)-[histone H4] + S-adenosyl-L-homocysteine + H(+). It carries out the reaction L-lysyl-[protein] + S-adenosyl-L-methionine = N(6)-methyl-L-lysyl-[protein] + S-adenosyl-L-homocysteine + H(+). In terms of biological role, protein-lysine N-methyltransferase that monomethylates both histones and non-histone proteins. Specifically monomethylates 'Lys-20' of histone H4 (H4K20me1). H4K20me1 is enriched during mitosis and represents a specific tag for epigenetic transcriptional repression. Mainly functions in euchromatin regions, thereby playing a central role in the silencing of euchromatic genes. Required for cell proliferation, probably by contributing to the maintenance of proper higher-order structure of DNA during mitosis. Involved in chromosome condensation and proper cytokinesis. The sequence is that of N-lysine methyltransferase KMT5A-A from Xenopus laevis (African clawed frog).